We begin with the raw amino-acid sequence, 648 residues long: Probable potassium transport system protein Kup 1 (648 aa).

Transmembrane regions (helical) follow at residues 25–45, 57–77, 113–133, 153–173, 184–204, 219–239, 263–283, 312–332, 362–382, 391–411, 417–437, and 446–466; these read LTLGALGVVFGDIGTSPIYAF, IVAGEILGVLSLALWALILVV, LVMALGAIGAALFYGDGVITP, SVSRGEILLITSAILIGLFLM, LFGPVCLVWFVTIGGIGLIHI, GVLFMANHGVAGMFVMGAVFL, WLAIVFPALALNYLGQGAFAL, IPLVILATCATVIASQAVITG, IYLPTITMLLFVGVMVLVLGF, AYGVSVSGTMVVTTCLAFLVV, WGWPLTVAVIVPLLLLDLFFF, and EGGWVPLIVAGGVGLLIVTWV.

The protein belongs to the HAK/KUP transporter (TC 2.A.72) family.

It is found in the cell inner membrane. It catalyses the reaction K(+)(in) + H(+)(in) = K(+)(out) + H(+)(out). In terms of biological role, transport of potassium into the cell. Likely operates as a K(+):H(+) symporter. The chain is Probable potassium transport system protein Kup 1 from Rhizorhabdus wittichii (strain DSM 6014 / CCUG 31198 / JCM 15750 / NBRC 105917 / EY 4224 / RW1) (Sphingomonas wittichii).